A 246-amino-acid chain; its full sequence is Ribonuclease 3 (246 aa).

The RNase III domain maps to 10–143 (LERLEQALDY…LLGAIYLDGG (134 aa)). Mg(2+) is bound at residue Glu56. The active site involves Asp60. Asn129 and Glu132 together coordinate Mg(2+). The active site involves Glu132. The 70-residue stretch at 170 to 239 (DYKTLLQEYL…AQQALELLIE (70 aa)) folds into the DRBM domain.

This sequence belongs to the ribonuclease III family. As to quaternary structure, homodimer. The cofactor is Mg(2+).

The protein localises to the cytoplasm. The enzyme catalyses Endonucleolytic cleavage to 5'-phosphomonoester.. Its function is as follows. Digests double-stranded RNA. Involved in the processing of primary rRNA transcript to yield the immediate precursors to the large and small rRNAs (23S and 16S). Processes some mRNAs, and tRNAs when they are encoded in the rRNA operon. Processes pre-crRNA and tracrRNA of type II CRISPR loci if present in the organism. In Magnetococcus marinus (strain ATCC BAA-1437 / JCM 17883 / MC-1), this protein is Ribonuclease 3.